The chain runs to 955 residues: Isoleucine--tRNA ligase (955 aa).

Positions 58–68 (IYANGDIHIGH) match the 'HIGH' region motif. An L-isoleucyl-5'-AMP-binding site is contributed by Glu552. A 'KMSKS' region motif is present at residues 593-597 (KMSKS). Lys596 is an ATP binding site. Residues Cys918, Cys921, Cys938, and Cys941 each contribute to the Zn(2+) site.

Belongs to the class-I aminoacyl-tRNA synthetase family. IleS type 1 subfamily. Monomer. Zn(2+) serves as cofactor.

It is found in the cytoplasm. The enzyme catalyses tRNA(Ile) + L-isoleucine + ATP = L-isoleucyl-tRNA(Ile) + AMP + diphosphate. Catalyzes the attachment of isoleucine to tRNA(Ile). As IleRS can inadvertently accommodate and process structurally similar amino acids such as valine, to avoid such errors it has two additional distinct tRNA(Ile)-dependent editing activities. One activity is designated as 'pretransfer' editing and involves the hydrolysis of activated Val-AMP. The other activity is designated 'posttransfer' editing and involves deacylation of mischarged Val-tRNA(Ile). This is Isoleucine--tRNA ligase from Vesicomyosocius okutanii subsp. Calyptogena okutanii (strain HA).